The following is a 20-amino-acid chain: Cytochrome c oxidase subunit 5B heart, mitochondrial (20 aa).

The disordered stretch occupies residues residue 1–alanine 20.

The protein belongs to the cytochrome c oxidase subunit 5B family. In terms of assembly, component of the cytochrome c oxidase (complex IV, CIV), a multisubunit enzyme composed of 14 subunits. The complex is composed of a catalytic core of 3 subunits MT-CO1, MT-CO2 and MT-CO3, encoded in the mitochondrial DNA, and 11 supernumerary subunits COX4I, COX5A, COX5B, COX6A, COX6B, COX6C, COX7A, COX7B, COX7C, COX8 and NDUFA4, which are encoded in the nuclear genome. The complex exists as a monomer or a dimer and forms supercomplexes (SCs) in the inner mitochondrial membrane with NADH-ubiquinone oxidoreductase (complex I, CI) and ubiquinol-cytochrome c oxidoreductase (cytochrome b-c1 complex, complex III, CIII), resulting in different assemblies (supercomplex SCI(1)III(2)IV(1) and megacomplex MCI(2)III(2)IV(2)).

It is found in the mitochondrion inner membrane. The protein operates within energy metabolism; oxidative phosphorylation. In terms of biological role, component of the cytochrome c oxidase, the last enzyme in the mitochondrial electron transport chain which drives oxidative phosphorylation. The respiratory chain contains 3 multisubunit complexes succinate dehydrogenase (complex II, CII), ubiquinol-cytochrome c oxidoreductase (cytochrome b-c1 complex, complex III, CIII) and cytochrome c oxidase (complex IV, CIV), that cooperate to transfer electrons derived from NADH and succinate to molecular oxygen, creating an electrochemical gradient over the inner membrane that drives transmembrane transport and the ATP synthase. Cytochrome c oxidase is the component of the respiratory chain that catalyzes the reduction of oxygen to water. Electrons originating from reduced cytochrome c in the intermembrane space (IMS) are transferred via the dinuclear copper A center (CU(A)) of subunit 2 and heme A of subunit 1 to the active site in subunit 1, a binuclear center (BNC) formed by heme A3 and copper B (CU(B)). The BNC reduces molecular oxygen to 2 water molecules using 4 electrons from cytochrome c in the IMS and 4 protons from the mitochondrial matrix. The protein is Cytochrome c oxidase subunit 5B heart, mitochondrial of Oncorhynchus mykiss (Rainbow trout).